A 201-amino-acid polypeptide reads, in one-letter code: Ras-related protein Rab-9B (201 aa).

Residues valine 18, glycine 19, lysine 20, serine 21, serine 22, aspartate 33, serine 34, alanine 36, histidine 38, and threonine 39 each contribute to the GTP site. Mg(2+) is bound at residue serine 21. The Switch 1 motif lies at 31–42; sequence KFDSQAFHTIGV. Residue serine 34 is modified to Phosphoserine. Residues threonine 39 and aspartate 62 each coordinate Mg(2+). The Switch 2 motif lies at 64–78; sequence AGQERFKSLRTPFYR. Residues glycine 65, asparagine 124, lysine 125, alanine 155, and lysine 156 each contribute to the GTP site. 2 S-geranylgeranyl cysteine lipidation sites follow: cysteine 200 and cysteine 201.

It belongs to the small GTPase superfamily. Rab family. In terms of assembly, interacts (GTP-bound form) with SGSM1; the GDP-bound form has much lower affinity for SGSM1. The GTP-bound form but not the GDP-bound form interacts with HPS4 and the BLOC-3 complex (heterodimer of HPS1 and HPS4) but does not interact with HPS1 alone. Interacts (GTP-bound form) with NDE1. Mg(2+) serves as cofactor.

It localises to the cell membrane. The protein resides in the cytoplasmic vesicle. Its subcellular location is the phagosome membrane. It catalyses the reaction GTP + H2O = GDP + phosphate + H(+). Regulated by guanine nucleotide exchange factors (GEFs) which promote the exchange of bound GDP for free GTP. Regulated by GTPase activating proteins (GAPs) which increase the GTP hydrolysis activity. Inhibited by GDP dissociation inhibitors (GDIs). The small GTPases Rab are key regulators of intracellular membrane trafficking, from the formation of transport vesicles to their fusion with membranes. Rabs cycle between an inactive GDP-bound form and an active GTP-bound form that is able to recruit to membranes different sets of downstream effectors directly responsible for vesicle formation, movement, tethering and fusion. RAB9B is involved in the transport of proteins between the endosomes and the trans Golgi network. May use NDE1/NDEL1 as an effector to interact with the dynein motor complex in order to control retrograde trafficking of RAB9-associated late endosomes to the TGN. The polypeptide is Ras-related protein Rab-9B (RAB9B) (Pongo abelii (Sumatran orangutan)).